Reading from the N-terminus, the 370-residue chain is tRNA-specific 2-thiouridylase MnmA (370 aa).

Residues 24–31 (AMSGGVDS) and Leu50 contribute to the ATP site. Residue Cys119 is the Nucleophile of the active site. Cys119 and Cys215 form a disulfide bridge. ATP is bound at residue Gly143. Residues 165-167 (KDQ) are interaction with tRNA. Residue Cys215 is the Cysteine persulfide intermediate of the active site.

This sequence belongs to the MnmA/TRMU family.

The protein resides in the cytoplasm. It carries out the reaction S-sulfanyl-L-cysteinyl-[protein] + uridine(34) in tRNA + AH2 + ATP = 2-thiouridine(34) in tRNA + L-cysteinyl-[protein] + A + AMP + diphosphate + H(+). In terms of biological role, catalyzes the 2-thiolation of uridine at the wobble position (U34) of tRNA, leading to the formation of s(2)U34. In Wolbachia pipientis wMel, this protein is tRNA-specific 2-thiouridylase MnmA.